Consider the following 479-residue polypeptide: Isoprimeverose transporter (479 aa).

A run of 11 helical transmembrane segments spans residues 54-74 (MFFY…LFLV), 102-122 (PYWL…FTVP), 131-151 (VWAY…NIPI), 174-194 (FMGT…VAYF), 205-225 (WFMV…IVFA), 253-273 (WPWV…QTRS), 289-309 (LASF…ITPW), 321-341 (LMGM…SKAL), 348-368 (VGTI…AVML), 397-417 (FGMG…GYVA), and 431-451 (MNYV…LLFY).

Belongs to the sodium:galactoside symporter (TC 2.A.2) family.

Its subcellular location is the cell membrane. Functionally, involved in the metabolism of isoprimeverose. Transports isoprimeverose into the cell. Transport is driven by the proton motive force generated by malolactic fermentation. Cannot transport D-xylose. In Lactiplantibacillus pentosus (Lactobacillus pentosus), this protein is Isoprimeverose transporter.